Here is a 289-residue protein sequence, read N- to C-terminus: Nodulation protein NolT (289 aa).

An N-terminal signal peptide occupies residues 1-33; sequence MFGSAHGDTTSSDTSGRRPLRLVVLPLLLALSS. A lipid anchor (N-palmitoyl cysteine) is attached at C34. C34 carries S-diacylglycerol cysteine lipidation. A helical transmembrane segment spans residues 233 to 253; the sequence is VAVGVGAAVFAVTCYLLFIVL.

Belongs to the YscJ lipoprotein family.

The protein resides in the cell outer membrane. Regulates cultivar-specific nodulation of soybean. This Rhizobium fredii (Sinorhizobium fredii) protein is Nodulation protein NolT (nolT).